Reading from the N-terminus, the 212-residue chain is Uracil phosphoribosyltransferase (212 aa).

5-phospho-alpha-D-ribose 1-diphosphate-binding positions include Arg-78, Arg-103, and 130-138; that span reads DPMLATGSS. Uracil contacts are provided by residues Ile-193 and 198 to 200; that span reads GDA. Asp-199 provides a ligand contact to 5-phospho-alpha-D-ribose 1-diphosphate.

It belongs to the UPRTase family. The cofactor is Mg(2+).

The catalysed reaction is UMP + diphosphate = 5-phospho-alpha-D-ribose 1-diphosphate + uracil. The protein operates within pyrimidine metabolism; UMP biosynthesis via salvage pathway; UMP from uracil: step 1/1. Its activity is regulated as follows. Allosterically activated by GTP. Catalyzes the conversion of uracil and 5-phospho-alpha-D-ribose 1-diphosphate (PRPP) to UMP and diphosphate. This chain is Uracil phosphoribosyltransferase, found in Pseudomonas fluorescens (strain Pf0-1).